Here is a 156-residue protein sequence, read N- to C-terminus: Large ribosomal subunit protein uL23 (156 aa).

Residues 1–19 are compositionally biased toward basic and acidic residues; the sequence is MAPKAKKEAPAPPKAEAKA. Residues 1-67 form a disordered region; the sequence is MAPKAKKEAP…PKYPRKSAPR (67 aa). At A2 the chain carries N,N,N-trimethylalanine. Residue K14 forms a Glycyl lysine isopeptide (Lys-Gly) (interchain with G-Cter in SUMO2) linkage. Basic residues predominate over residues 20-67; it reads KALKAKKAVLKGVHSHKKKKIRTSPTFRRPKTLRLRRQPKYPRKSAPR. The segment at 32–74 is beta-like import receptor binding (BIB) domain; that stretch reads VHSHKKKKIRTSPTFRRPKTLRLRRQPKYPRKSAPRRNKLDHY. Position 41 is a citrulline (R41). S43 carries the post-translational modification Phosphoserine. T45 is modified (phosphothreonine). K70 carries the post-translational modification N6-acetyllysine.

The protein belongs to the universal ribosomal protein uL23 family. Component of the large ribosomal subunit. Interacts with LYAR and GNL2. Interacts with MDM2; this interaction may promote MDM2-mediated p53/TP53 polyubiquitination. Directly interacts (via BIB domain) with IPO5, IPO7, KPNB1 and TNPO1; these interactions are involved in RPL23A nuclear import for the assembly of ribosomal subunits. Interacts with IPO8. N-terminus is methylated by METTL11A/NTM1. Post-translationally, citrullinated by PADI4.

It is found in the cytoplasm. Its subcellular location is the nucleus. Component of the large ribosomal subunit. The ribosome is a large ribonucleoprotein complex responsible for the synthesis of proteins in the cell. Binds a specific region on the 26S rRNA. May promote p53/TP53 degradation possibly through the stimulation of MDM2-mediated TP53 polyubiquitination. The chain is Large ribosomal subunit protein uL23 (RPL23A) from Bos taurus (Bovine).